Consider the following 480-residue polypeptide: Glutamate--tRNA ligase (480 aa).

Residues 21–31 carry the 'HIGH' region motif; sequence PSPTGYLHVGG. Zn(2+)-binding residues include cysteine 110, cysteine 112, cysteine 137, and histidine 139. Positions 248–252 match the 'KMSKS' region motif; sequence KLSKR. Residue lysine 251 coordinates ATP.

It belongs to the class-I aminoacyl-tRNA synthetase family. Glutamate--tRNA ligase type 1 subfamily. Monomer. Zn(2+) serves as cofactor.

The protein resides in the cytoplasm. It carries out the reaction tRNA(Glu) + L-glutamate + ATP = L-glutamyl-tRNA(Glu) + AMP + diphosphate. Catalyzes the attachment of glutamate to tRNA(Glu) in a two-step reaction: glutamate is first activated by ATP to form Glu-AMP and then transferred to the acceptor end of tRNA(Glu). This Histophilus somni (strain 2336) (Haemophilus somnus) protein is Glutamate--tRNA ligase.